The following is a 171-amino-acid chain: Adenine phosphoribosyltransferase (171 aa).

It belongs to the purine/pyrimidine phosphoribosyltransferase family. Homodimer.

The protein localises to the cytoplasm. It catalyses the reaction AMP + diphosphate = 5-phospho-alpha-D-ribose 1-diphosphate + adenine. Its pathway is purine metabolism; AMP biosynthesis via salvage pathway; AMP from adenine: step 1/1. Functionally, catalyzes a salvage reaction resulting in the formation of AMP, that is energically less costly than de novo synthesis. In Methylococcus capsulatus (strain ATCC 33009 / NCIMB 11132 / Bath), this protein is Adenine phosphoribosyltransferase.